The chain runs to 363 residues: Aminomethyltransferase (363 aa).

The protein belongs to the GcvT family. As to quaternary structure, the glycine cleavage system is composed of four proteins: P, T, L and H.

It carries out the reaction N(6)-[(R)-S(8)-aminomethyldihydrolipoyl]-L-lysyl-[protein] + (6S)-5,6,7,8-tetrahydrofolate = N(6)-[(R)-dihydrolipoyl]-L-lysyl-[protein] + (6R)-5,10-methylene-5,6,7,8-tetrahydrofolate + NH4(+). The glycine cleavage system catalyzes the degradation of glycine. The polypeptide is Aminomethyltransferase (Staphylococcus aureus (strain N315)).